The following is a 124-amino-acid chain: Fluoride-specific ion channel FluC (124 aa).

The next 4 helical transmembrane spans lie at 5-25 (LVVFVGAGLGGALRHGVNLAA), 36-56 (TMIINIAGSLAMGLLTGWFAV), 70-90 (TGILGGFTTFSTFSLEAFLLM), and 100-120 (LYVLGSVAAGIAGVGASLAVI). Na(+)-binding residues include Gly74 and Thr77.

This sequence belongs to the fluoride channel Fluc/FEX (TC 1.A.43) family.

Its subcellular location is the cell inner membrane. The enzyme catalyses fluoride(in) = fluoride(out). Its activity is regulated as follows. Na(+) is not transported, but it plays an essential structural role and its presence is essential for fluoride channel function. Functionally, fluoride-specific ion channel. Important for reducing fluoride concentration in the cell, thus reducing its toxicity. This Methylobacterium nodulans (strain LMG 21967 / CNCM I-2342 / ORS 2060) protein is Fluoride-specific ion channel FluC.